Reading from the N-terminus, the 309-residue chain is Probable cell division protein kinase ECU11_1290 (309 aa).

Residues 4-288 form the Protein kinase domain; that stretch reads YENIKQVGEG…VISSHKNTYI (285 aa). Residues 10–18 and lysine 33 each bind ATP; that span reads VGEGAFGQV. The Proton acceptor role is filled by aspartate 124.

The protein belongs to the protein kinase superfamily. CMGC Ser/Thr protein kinase family. CDC2/CDKX subfamily.

Its subcellular location is the nucleus. It catalyses the reaction L-seryl-[protein] + ATP = O-phospho-L-seryl-[protein] + ADP + H(+). The catalysed reaction is L-threonyl-[protein] + ATP = O-phospho-L-threonyl-[protein] + ADP + H(+). Its function is as follows. May play a role in the control of the eukaryotic cell cycle. This is Probable cell division protein kinase ECU11_1290 from Encephalitozoon cuniculi (strain GB-M1) (Microsporidian parasite).